Here is a 216-residue protein sequence, read N- to C-terminus: Cytidylate kinase (216 aa).

An ATP-binding site is contributed by 7-15; the sequence is GPSGTGKST.

This sequence belongs to the cytidylate kinase family. Type 1 subfamily.

The protein resides in the cytoplasm. It catalyses the reaction CMP + ATP = CDP + ADP. The catalysed reaction is dCMP + ATP = dCDP + ADP. In Chlamydia pneumoniae (Chlamydophila pneumoniae), this protein is Cytidylate kinase.